Reading from the N-terminus, the 308-residue chain is MQEKISKFEDFLTQLQQNITTALEQHETNAAKFISDKWQKPDTPDQKLKGYGNSMIIEGGEIFEKGVVAFSRVHGSELPPFATAKRQELAGKSFIATGLSLVIHPRNPFVPTSHANFRIFIAGADTDNPIWWFGGGFDLTPYYPFEEDAIHWHQTAKNICDKHDKTYYPKFKKWCDEYFYLKHRDEYRGVGGLFFDDLNDKSFDECFNFVTDCANSYLDAYIPIVAQRKNIEYSQKHKDFQLYRRGRYVEFNLVFDRGTIFGLQSGGRTESILSSMPPMATWKYNWQPELGSEEEKVYQYIKPRDWIK.

S100 is a binding site for substrate. Positions 104 and 114 each coordinate a divalent metal cation. Catalysis depends on H114, which acts as the Proton donor. 116–118 contacts substrate; that stretch reads NFR. 2 residues coordinate a divalent metal cation: H153 and H183. Residues 248 to 283 form an important for dimerization region; that stretch reads YVEFNLVFDRGTIFGLQSGGRTESILSSMPPMATWK. Position 266–268 (266–268) interacts with substrate; sequence GGR.

Belongs to the aerobic coproporphyrinogen-III oxidase family. As to quaternary structure, homodimer. Requires a divalent metal cation as cofactor.

The protein resides in the cytoplasm. The catalysed reaction is coproporphyrinogen III + O2 + 2 H(+) = protoporphyrinogen IX + 2 CO2 + 2 H2O. It participates in porphyrin-containing compound metabolism; protoporphyrin-IX biosynthesis; protoporphyrinogen-IX from coproporphyrinogen-III (O2 route): step 1/1. In terms of biological role, involved in the heme biosynthesis. Catalyzes the aerobic oxidative decarboxylation of propionate groups of rings A and B of coproporphyrinogen-III to yield the vinyl groups in protoporphyrinogen-IX. The sequence is that of Oxygen-dependent coproporphyrinogen-III oxidase from Francisella tularensis subsp. holarctica (strain FTNF002-00 / FTA).